Reading from the N-terminus, the 572-residue chain is Mitochondrial distribution and morphology protein 34 (572 aa).

Residues 1–195 (MAFNFNWSPL…LPAIIHRLSL (195 aa)) enclose the SMP-LTD domain. 3 disordered regions span residues 210–239 (TQAEKAETANGEGPGQDPLASPPQDPVDAL), 330–423 (SASI…PLSP), and 455–482 (RDMGGPSSTSDPATQATQSEDTSATPRA). Polar residues predominate over residues 330–347 (SASIASMQTRSSTPSHTF). Residues 358-370 (RHSKAHSRKRKKR) are compositionally biased toward basic residues. The span at 371-381 (VVDLRRPKTTD) shows a compositional bias: basic and acidic residues. Composition is skewed to polar residues over residues 387 to 400 (SDESAFTESTSAPS) and 460 to 480 (PSSTSDPATQATQSEDTSATP).

This sequence belongs to the MDM34 family. In terms of assembly, component of the ER-mitochondria encounter structure (ERMES) or MDM complex, composed of mmm1, mdm10, mdm12 and mdm34.

It is found in the mitochondrion outer membrane. In terms of biological role, component of the ERMES/MDM complex, which serves as a molecular tether to connect the endoplasmic reticulum (ER) and mitochondria. Components of this complex are involved in the control of mitochondrial shape and protein biogenesis, and function in nonvesicular lipid trafficking between the ER and mitochondria. Mdm34 is required for the interaction of the ER-resident membrane protein mmm1 and the outer mitochondrial membrane-resident beta-barrel protein mdm10. This chain is Mitochondrial distribution and morphology protein 34, found in Aspergillus clavatus (strain ATCC 1007 / CBS 513.65 / DSM 816 / NCTC 3887 / NRRL 1 / QM 1276 / 107).